Consider the following 255-residue polypeptide: 2,3-dehydroadipyl-CoA hydratase (255 aa).

Belongs to the enoyl-CoA hydratase/isomerase family.

It catalyses the reaction a (3S)-3-hydroxyacyl-CoA = a (2E)-enoyl-CoA + H2O. It carries out the reaction a 4-saturated-(3S)-3-hydroxyacyl-CoA = a (3E)-enoyl-CoA + H2O. It participates in aromatic compound metabolism; phenylacetate degradation. Catalyzes the reversible conversion of enzymatically produced 2,3-dehydroadipyl-CoA into 3-hydroxyadipyl-CoA. In Escherichia coli (strain K12), this protein is 2,3-dehydroadipyl-CoA hydratase (paaF).